We begin with the raw amino-acid sequence, 361 residues long: Peptide chain release factor 1 (361 aa).

The residue at position 235 (Q235) is an N5-methylglutamine.

This sequence belongs to the prokaryotic/mitochondrial release factor family. In terms of processing, methylated by PrmC. Methylation increases the termination efficiency of RF1.

The protein resides in the cytoplasm. In terms of biological role, peptide chain release factor 1 directs the termination of translation in response to the peptide chain termination codons UAG and UAA. In Buchnera aphidicola subsp. Schizaphis graminum (strain Sg), this protein is Peptide chain release factor 1.